We begin with the raw amino-acid sequence, 218 residues long: Small ribosomal subunit protein uS3c (218 aa).

The KH type-2 domain occupies 47-118; the sequence is VQKNIRISSG…KLNIAITRIS (72 aa).

This sequence belongs to the universal ribosomal protein uS3 family. In terms of assembly, part of the 30S ribosomal subunit.

The protein localises to the plastid. The protein resides in the chloroplast. In Arabis hirsuta (Hairy rock-cress), this protein is Small ribosomal subunit protein uS3c (rps3).